A 199-amino-acid chain; its full sequence is NADH-quinone oxidoreductase subunit C (199 aa).

Belongs to the complex I 30 kDa subunit family. NDH-1 is composed of 14 different subunits. Subunits NuoB, C, D, E, F, and G constitute the peripheral sector of the complex.

It is found in the cell inner membrane. It carries out the reaction a quinone + NADH + 5 H(+)(in) = a quinol + NAD(+) + 4 H(+)(out). In terms of biological role, NDH-1 shuttles electrons from NADH, via FMN and iron-sulfur (Fe-S) centers, to quinones in the respiratory chain. The immediate electron acceptor for the enzyme in this species is believed to be ubiquinone. Couples the redox reaction to proton translocation (for every two electrons transferred, four hydrogen ions are translocated across the cytoplasmic membrane), and thus conserves the redox energy in a proton gradient. This Paramagnetospirillum magneticum (strain ATCC 700264 / AMB-1) (Magnetospirillum magneticum) protein is NADH-quinone oxidoreductase subunit C.